We begin with the raw amino-acid sequence, 113 residues long: Putative pterin-4-alpha-carbinolamine dehydratase (113 aa).

This sequence belongs to the pterin-4-alpha-carbinolamine dehydratase family.

The enzyme catalyses (4aS,6R)-4a-hydroxy-L-erythro-5,6,7,8-tetrahydrobiopterin = (6R)-L-erythro-6,7-dihydrobiopterin + H2O. This chain is Putative pterin-4-alpha-carbinolamine dehydratase, found in Nitrosococcus oceani (strain ATCC 19707 / BCRC 17464 / JCM 30415 / NCIMB 11848 / C-107).